Reading from the N-terminus, the 149-residue chain is SsrA-binding protein (149 aa).

The protein belongs to the SmpB family.

Its subcellular location is the cytoplasm. Its function is as follows. Required for rescue of stalled ribosomes mediated by trans-translation. Binds to transfer-messenger RNA (tmRNA), required for stable association of tmRNA with ribosomes. tmRNA and SmpB together mimic tRNA shape, replacing the anticodon stem-loop with SmpB. tmRNA is encoded by the ssrA gene; the 2 termini fold to resemble tRNA(Ala) and it encodes a 'tag peptide', a short internal open reading frame. During trans-translation Ala-aminoacylated tmRNA acts like a tRNA, entering the A-site of stalled ribosomes, displacing the stalled mRNA. The ribosome then switches to translate the ORF on the tmRNA; the nascent peptide is terminated with the 'tag peptide' encoded by the tmRNA and targeted for degradation. The ribosome is freed to recommence translation, which seems to be the essential function of trans-translation. This Mesoplasma florum (strain ATCC 33453 / NBRC 100688 / NCTC 11704 / L1) (Acholeplasma florum) protein is SsrA-binding protein.